The sequence spans 358 residues: MAVEYFQEKLNKWRYSPVAGSPDEEGGNATVKPKASFVPVYAGLTIISLITVTVSLVHLLSGTGTTTTFPPCKNPAVRREWRSLTSSEKQNFTQAVICLASIPSTWQPNGTIYDDFAILHGGIGSWCHRSASFLPWHRYTLVVFEKALREHCGFTGQVPYWDWTLDWMNLANSSIFNSVDGFGGDGDRTGQEVVGGGRCVIDGPFAGLQPILYNHTYVRHCIARGFRDGDQAGRISGEYYRPESIGGILRKQSYVELVREVEIYLHNPLHQGVNGDFLAMTAANDPLFYVHHAQLDRLWWRWQQESPDLRLKEYHGKHMYNSTGNATLDDILMYGGFAEDIPVSRVMDTKGGFLCYTY.

Residue N28 is glycosylated (N-linked (GlcNAc...) asparagine). A helical membrane pass occupies residues 37 to 57 (FVPVYAGLTIISLITVTVSLV). N-linked (GlcNAc...) asparagine glycosylation is found at N91 and N109. Cu cation contacts are provided by H128 and H137. N-linked (GlcNAc...) asparagine glycans are attached at residues N172 and N214. Residues H266, H270, and H292 each coordinate Cu cation. Residues N321 and N325 are each glycosylated (N-linked (GlcNAc...) asparagine).

The protein belongs to the tyrosinase family. The cofactor is Cu(2+).

The protein localises to the membrane. The catalysed reaction is 2 L-dopa + O2 = 2 L-dopaquinone + 2 H2O. The enzyme catalyses L-tyrosine + O2 = L-dopaquinone + H2O. It participates in mycotoxin biosynthesis. Its function is as follows. Tyrosinase; part of the gene cluster that mediates the biosynthesis of the secondary metabolite ustiloxin B, an antimitotic tetrapeptide. First, ustA is processed by the subtilisin-like endoprotease Kex2 that is outside the ustiloxin B gene cluster, at the C-terminal side of Arg-Lys, after transfer to Golgi apparatus through the endoplasmic reticulum (ER). Cleavage by KEX2 generates 16 peptides YAIG-I to YAIG-XVI. To process the precursor peptide further, at least two peptidases are necessary to cleave the N-terminal and C-terminal sides of the Tyr-Ala-Ile-Gly core peptide which serves as backbone for the synthesis of ustiloxin B, through cyclization and modification of the tyrosine with a non-protein coding amino acid, norvaline. One of the two peptidases must be the serine peptidase ustP; and the other pepdidase is probably ustH. Macrocyclization of the core peptide derived from ustA requires the tyrosinase ustQ, as well as the homologous oxidases ustYa and ustYb, and leads to the production of the first cyclization product N-desmethylustiloxin F. For the formation of N-desmethylustiloxin F, three oxidation steps are required, hydroxylation at the benzylic position, hydroxylation at either the aromatic ring of Tyr or beta-position of Ile, and oxidative cyclization. UstQ may catalyze the oxidation of a phenol moiety, whereas the ustYa and ustYb are most likely responsible for the remaining two-step oxidations. N-desmethylustiloxin F is then methylated by ustM to yield ustiloxin F which in turn substrate of the cytochrome P450 monooxygenase ustC which catalyzes the formation of S-deoxyustiloxin H. The flavoprotein monooxygenases ustF1 and ustF2 then participate in the modification of the side chain of S-deoxyustiloxin H, leading to the synthesis of an oxime intermediate, via ustiloxin H. Finally, carboxylative dehydration performed by the cysteine desulfurase-like protein ustD yields ustiloxin B. This Aspergillus flavus (strain ATCC 200026 / FGSC A1120 / IAM 13836 / NRRL 3357 / JCM 12722 / SRRC 167) protein is Tyrosinase ustQ.